A 177-amino-acid polypeptide reads, in one-letter code: Inner membrane-spanning protein YciB (177 aa).

Transmembrane regions (helical) follow at residues 22-42 (IFIA…IHWI), 50-70 (ISLF…FFHN), 76-96 (WKIT…QFFT), 121-141 (FIWS…AYYF), and 149-169 (FKVF…SIYI).

It belongs to the YciB family.

Its subcellular location is the cell inner membrane. Its function is as follows. Plays a role in cell envelope biogenesis, maintenance of cell envelope integrity and membrane homeostasis. The protein is Inner membrane-spanning protein YciB of Buchnera aphidicola subsp. Acyrthosiphon pisum (strain 5A).